Here is a 96-residue protein sequence, read N- to C-terminus: Small ribosomal subunit protein bS16 (96 aa).

It belongs to the bacterial ribosomal protein bS16 family.

This Vesicomyosocius okutanii subsp. Calyptogena okutanii (strain HA) protein is Small ribosomal subunit protein bS16.